Consider the following 376-residue polypeptide: DNA-directed RNA polymerase subunit alpha (376 aa).

Residues 1–259 are alpha N-terminal domain (alpha-NTD); that stretch reads MSDCSQNLLY…KHFSIFEKMD (259 aa). Residues 276–376 are alpha C-terminal domain (alpha-CTD); that stretch reads KDDILHKLVL…DKIRSKNGKG (101 aa).

Belongs to the RNA polymerase alpha chain family. As to quaternary structure, homodimer. The RNAP catalytic core consists of 2 alpha, 1 beta, 1 beta' and 1 omega subunit. When a sigma factor is associated with the core the holoenzyme is formed, which can initiate transcription.

The enzyme catalyses RNA(n) + a ribonucleoside 5'-triphosphate = RNA(n+1) + diphosphate. DNA-dependent RNA polymerase catalyzes the transcription of DNA into RNA using the four ribonucleoside triphosphates as substrates. The sequence is that of DNA-directed RNA polymerase subunit alpha from Chlamydia abortus (strain DSM 27085 / S26/3) (Chlamydophila abortus).